Here is a 446-residue protein sequence, read N- to C-terminus: Putative F-box protein At1g32660 (446 aa).

Basic and acidic residues-rich tracts occupy residues 1–12 (MKRKDDDQEDRS) and 43–57 (NKLE…NPSK). The disordered stretch occupies residues 1–57 (MKRKDDDQEDRSCSSASKLDPIPLDLKMATVPTKSHMKKSHQNKLEEDEKEDTNPSK). The F-box domain maps to 57–107 (KLELDSLPLDLKMAILTRIPAKSLMKLRCVSKMWSSIIRSRGFIDSYYAIS).

This chain is Putative F-box protein At1g32660, found in Arabidopsis thaliana (Mouse-ear cress).